The primary structure comprises 211 residues: Prolactin-3C1 (211 aa).

Positions 1–29 (MQLSLTQARTWKGLLLLVSCMILWISVTP) are cleaved as a signal peptide. 2 N-linked (GlcNAc...) asparagine glycosylation sites follow: Asn-77 and Asn-173. Cys-80 and Cys-187 are disulfide-bonded.

The protein belongs to the somatotropin/prolactin family. In terms of tissue distribution, expressed exclusively in decidual tissue.

Its subcellular location is the secreted. The chain is Prolactin-3C1 (Prl3c1) from Rattus norvegicus (Rat).